The chain runs to 413 residues: Serine hydroxymethyltransferase (413 aa).

Residues Leu-115 and 119-121 (GHL) contribute to the (6S)-5,6,7,8-tetrahydrofolate site. An N6-(pyridoxal phosphate)lysine modification is found at Lys-224.

It belongs to the SHMT family. Homodimer. Pyridoxal 5'-phosphate is required as a cofactor.

The protein localises to the cytoplasm. The catalysed reaction is (6R)-5,10-methylene-5,6,7,8-tetrahydrofolate + glycine + H2O = (6S)-5,6,7,8-tetrahydrofolate + L-serine. It functions in the pathway one-carbon metabolism; tetrahydrofolate interconversion. It participates in amino-acid biosynthesis; glycine biosynthesis; glycine from L-serine: step 1/1. In terms of biological role, catalyzes the reversible interconversion of serine and glycine with tetrahydrofolate (THF) serving as the one-carbon carrier. This reaction serves as the major source of one-carbon groups required for the biosynthesis of purines, thymidylate, methionine, and other important biomolecules. Also exhibits THF-independent aldolase activity toward beta-hydroxyamino acids, producing glycine and aldehydes, via a retro-aldol mechanism. The chain is Serine hydroxymethyltransferase from Mycoplasma capricolum subsp. capricolum (strain California kid / ATCC 27343 / NCTC 10154).